The sequence spans 474 residues: 4-O-methyl-glucuronoyl methylesterase (474 aa).

A signal peptide spans 1–17 (MFKPSFVALALVSYATA). Positions 19-55 (ASAPQWGQCGGIGWTGPTACPSGWACQQLNAYYSQCL) constitute a CBM1 domain. The disordered stretch occupies residues 61–91 (APARTTAAPPPPPATTAAPPPPTTSAPTGSS). Residues 68–84 (APPPPPATTAAPPPPTT) are compositionally biased toward pro residues. An N-linked (GlcNAc...) asparagine glycan is attached at Asn-120. A GXSYXG catalytic site motif motif is present at residues 284–289 (GCSRDG). 2 cysteine pairs are disulfide-bonded: Cys-285–Cys-421 and Cys-317–Cys-393. The Nucleophile role is filled by Ser-286. Substrate contacts are provided by Lys-290, Gln-332, Glu-340, and Trp-384. His-420 serves as the catalytic Proton donor/acceptor.

The protein belongs to the carbohydrate esterase 15 (CE15) family. N-glycosylated.

Its subcellular location is the secreted. The enzyme catalyses a 4-O-methyl-alpha-D-glucuronosyl ester derivative + H2O = 4-O-methyl-alpha-D-glucuronate derivative + an alcohol + H(+). Its function is as follows. Glucuronoyl esterase which may play a significant role in biomass degradation, as it is considered to disconnect hemicellulose from lignin through the hydrolysis of the ester bond between 4-O-methyl-D-glucuronic acid residues of glucuronoxylans and aromatic alcohols of lignin. In Cerrena unicolor (Canker rot fungus), this protein is 4-O-methyl-glucuronoyl methylesterase.